The primary structure comprises 119 residues: UPF0342 protein GK0640 (119 aa).

Belongs to the UPF0342 family.

The sequence is that of UPF0342 protein GK0640 from Geobacillus kaustophilus (strain HTA426).